A 569-amino-acid chain; its full sequence is MASPALISETEAWKDLKAHLEGIKMTHLRELMGDTERCQSMMVEFDNIFLDYSRQQASPDTISKLYKLADAAHLKQKIDRMYNGDHINTTENRSVLHVALRAPRNSAICSDGKNVVPDVWNVLDKIKDFSDSVRNGSWIGATGKELKDVIAVGIGGSFLGPLFVHTALQTDPEASKNARGRELRFLANVDPIDVARNISGLNPETTLVVVVSKTFTTAETMLNARTLREWISSALGPSAVAKHMVAVSTNLPLVEKFGIDPNNAFAFWDWVGGRYSVCSAVGVLPLSLQYGFAVVEKFLQGAHSIDQHFSSAPFEKNIPVLLGLLSVWNVSFLGYPARAILPYSQALEKLAPHIQQVSMESNGKGVSIDGLPLPFESGEIDFGEPGTNGQHSFYQLIHQGRVIPCDFIGVVKSQQPVYLKGEVVNNHDELMSNFFAQPDALAYGKTPEELKKENVSEHLIPHKTFTGNRPSISILLPTLDAYRIGQLLAIYEHRVAVQGFVWGINSFDQWGVELGKSLATQVRKQLHGSRVKGEPVEEGFNFSTKTLLTRYLQATSDVPADPSTLLPNI.

Glu360 functions as the Proton donor in the catalytic mechanism. Active-site residues include His391 and Lys516.

The protein belongs to the GPI family. As to quaternary structure, homodimer.

Its subcellular location is the cytoplasm. The catalysed reaction is alpha-D-glucose 6-phosphate = beta-D-fructose 6-phosphate. It participates in carbohydrate degradation; glycolysis; D-glyceraldehyde 3-phosphate and glycerone phosphate from D-glucose: step 2/4. This Clarkia lewisii (Farewell-to-spring) protein is Glucose-6-phosphate isomerase, cytosolic 1A (PGIC1-A).